Reading from the N-terminus, the 131-residue chain is Insertion element iso-IS1n protein InsB (131 aa).

The protein belongs to the transposase 27 family.

In terms of biological role, absolutely required for transposition of IS1. The chain is Insertion element iso-IS1n protein InsB (insB) from Shigella dysenteriae.